A 278-amino-acid chain; its full sequence is MSFSTRRQAYRAEKQDHRKELKHVKIDESVIEKVDKLSLPKKKFYRQRAHSNPFSDHQLEYPISPAHMDWSKLYPHFYDSEKKKMTKDVTIADIGCGYGGLMIDLSPEFPDEMILGMEIRVQVTNYVEDRIIALRTNHAKENGYQNINVLRGNAMKFLPNFFNKGQLSKIFFCFPDPHFKQRKHKARIVTDTLLSEYAYVLKEGGIIYTITDVLDLHEWMVKHLEEHPLFERLSEEWEAQDKCVSIMRNATEEGKKVERNKGDKYIACFVRLPTPDII.

S-adenosyl-L-methionine-binding positions include G95, 118–119, 153–154, and C173; these read EI and NA. D176 is an active-site residue. 251-253 serves as a coordination point for S-adenosyl-L-methionine; it reads TEE.

This sequence belongs to the class I-like SAM-binding methyltransferase superfamily. TrmB family. In terms of assembly, forms a complex with TRM82.

Its subcellular location is the nucleus. It catalyses the reaction guanosine(46) in tRNA + S-adenosyl-L-methionine = N(7)-methylguanosine(46) in tRNA + S-adenosyl-L-homocysteine. It functions in the pathway tRNA modification; N(7)-methylguanine-tRNA biosynthesis. Its function is as follows. Catalyzes the formation of N(7)-methylguanine at position 46 (m7G46) in tRNA. The protein is tRNA (guanine-N(7)-)-methyltransferase of Kluyveromyces lactis (strain ATCC 8585 / CBS 2359 / DSM 70799 / NBRC 1267 / NRRL Y-1140 / WM37) (Yeast).